The sequence spans 492 residues: 3-octaprenyl-4-hydroxybenzoate carboxy-lyase (492 aa).

Residue Asn172 coordinates Mn(2+). Residues 175–177, 189–191, and 194–195 contribute to the prenylated FMN site; these read IYR, RWL, and RG. Glu238 is a Mn(2+) binding site. Asp287 functions as the Proton donor in the catalytic mechanism.

It belongs to the UbiD family. As to quaternary structure, homohexamer. Prenylated FMN serves as cofactor. Requires Mn(2+) as cofactor.

It localises to the cell membrane. The enzyme catalyses a 4-hydroxy-3-(all-trans-polyprenyl)benzoate + H(+) = a 2-(all-trans-polyprenyl)phenol + CO2. Its pathway is cofactor biosynthesis; ubiquinone biosynthesis. In terms of biological role, catalyzes the decarboxylation of 3-octaprenyl-4-hydroxy benzoate to 2-octaprenylphenol, an intermediate step in ubiquinone biosynthesis. The protein is 3-octaprenyl-4-hydroxybenzoate carboxy-lyase of Pasteurella multocida (strain Pm70).